The chain runs to 205 residues: Mitotic spindle assembly checkpoint protein MAD2A (205 aa).

A2 bears the N-acetylalanine mark. Positions 14 to 197 (RGSAEIVAEF…TTIHKVNSMV (184 aa)) constitute an HORMA domain. Residues S130, S170, S185, and S195 each carry the phosphoserine modification. Residues 195–205 (SMVAYKTPVND) form a required for assuming the closed conformation and for interaction with CDC20 region.

This sequence belongs to the MAD2 family. In terms of assembly, monomer and homodimer. Heterodimerizes with MAD2L1 in order to form a tetrameric MAD1L1-MAD2L1 core complex. In the closed and open conformation, interacts with MAD1L1. Formation of a heterotetrameric core complex containing two molecules each of MAD1L1 and of MAD2L1 promotes binding of another molecule of MAD2L1 to each MAD2L1, resulting in a heterohexamer. Interacts with MAD2L1BP. Interacts with ADAM17/TACE. Interacts with CDC20. Dimeric MAD2L1 in the closed conformation interacts with CDC20. Monomeric MAD2L1 in the open conformation does not interact with CDC20. CDC20 competes with MAD1L1 for MAD2L1 binding. In the closed conformation, interacts with BUB1B. Interacts with TTK. Interacts with TPR. Binds to UBD (via ubiquitin-like 1 domain) during mitosis. Interacts with isoform 1 and isoform 2 of NEK2. Interacts with HSF1; this interaction occurs in mitosis. Phosphorylated on multiple serine residues. The level of phosphorylation varies during the cell cycle and is highest during mitosis. Phosphorylation abolishes interaction with MAD1L1 and reduces interaction with CDC20. Phosphorylated by NEK2.

It is found in the nucleus. The protein resides in the chromosome. The protein localises to the centromere. It localises to the kinetochore. Its subcellular location is the cytoplasm. It is found in the cytoskeleton. The protein resides in the spindle pole. Its function is as follows. Component of the spindle-assembly checkpoint that prevents the onset of anaphase until all chromosomes are properly aligned at the metaphase plate. In the closed conformation (C-MAD2) forms a heterotetrameric complex with MAD1L1 at unattached kinetochores during prometaphase, and recruits an open conformation of MAD2L1 (O-MAD2) which then promotes the conversion of O-MAD2 to C-MAD2. Required for the execution of the mitotic checkpoint which monitors the process of kinetochore-spindle attachment and inhibits the activity of the anaphase promoting complex by sequestering CDC20 until all chromosomes are aligned at the metaphase plate. The sequence is that of Mitotic spindle assembly checkpoint protein MAD2A (Mad2l1) from Mus musculus (Mouse).